The sequence spans 237 residues: tRNA(His) guanylyltransferase (237 aa).

Residues aspartate 29, glycine 30, and aspartate 77 each coordinate Mg(2+). GTP-binding positions include 29–34 (DGKHFH) and 76–77 (SD).

The protein belongs to the tRNA(His) guanylyltransferase family. It depends on Mg(2+) as a cofactor.

The enzyme catalyses a 5'-end ribonucleotide-tRNA(His) + GTP + ATP + H2O = a 5'-end phospho-guanosine-ribonucleotide-tRNA(His) + AMP + 2 diphosphate + H(+). In terms of biological role, adds a GMP to the 5'-end of tRNA(His) after transcription and RNase P cleavage. The sequence is that of tRNA(His) guanylyltransferase (THG1) from Eremothecium gossypii (strain ATCC 10895 / CBS 109.51 / FGSC 9923 / NRRL Y-1056) (Yeast).